The sequence spans 119 residues: Small ribosomal subunit protein uS13 (119 aa).

The interval 94–119 (GLPVRGQRTQTNARTRKGPRRGPAGK) is disordered.

Belongs to the universal ribosomal protein uS13 family. Part of the 30S ribosomal subunit. Forms a loose heterodimer with protein S19. Forms two bridges to the 50S subunit in the 70S ribosome.

Functionally, located at the top of the head of the 30S subunit, it contacts several helices of the 16S rRNA. In the 70S ribosome it contacts the 23S rRNA (bridge B1a) and protein L5 of the 50S subunit (bridge B1b), connecting the 2 subunits; these bridges are implicated in subunit movement. Contacts the tRNAs in the A and P-sites. This Alkalilimnicola ehrlichii (strain ATCC BAA-1101 / DSM 17681 / MLHE-1) protein is Small ribosomal subunit protein uS13.